Reading from the N-terminus, the 296-residue chain is Transcription repressor OFP3 (296 aa).

Disordered regions lie at residues 27 to 115 (MSRS…SANA) and 131 to 196 (PSDQ…AHSS). The segment covering 60–69 (LSSTAHHPQA) has biased composition (polar residues). A compositionally biased stretch (basic residues) spans 78 to 88 (SFKRKIKRKTV). Over residues 92-115 (SSRLKLSTSSSLNHRSKSSSSANA) the composition is skewed to low complexity. The span at 136–159 (FVHDPEPHSSIDIKDELSVRKLDD) shows a compositional bias: basic and acidic residues. The OVATE domain occupies 228 to 287 (IVLSSVDPEKDFRESMVEMIMENKMREQKDLEDLLACYLSLNSSEYHDVIIKAFENTWLH).

In terms of assembly, interacts with BLH1, BLH3, KNAT5 and KNAT7.

It localises to the nucleus. In terms of biological role, transcriptional repressor that may regulate multiple aspects of plant growth and development through the regulation of BEL1-LIKE (BLH) and KNOX TALE (KNAT) homeodomain transcription factors. This is Transcription repressor OFP3 (OFP3) from Arabidopsis thaliana (Mouse-ear cress).